The chain runs to 255 residues: Thiazole synthase (255 aa).

Lys-96 functions as the Schiff-base intermediate with DXP in the catalytic mechanism. 1-deoxy-D-xylulose 5-phosphate is bound by residues Gly-157, 183–184 (AG), and 205–206 (NS).

It belongs to the ThiG family. Homotetramer. Forms heterodimers with either ThiH or ThiS.

The protein localises to the cytoplasm. It catalyses the reaction [ThiS sulfur-carrier protein]-C-terminal-Gly-aminoethanethioate + 2-iminoacetate + 1-deoxy-D-xylulose 5-phosphate = [ThiS sulfur-carrier protein]-C-terminal Gly-Gly + 2-[(2R,5Z)-2-carboxy-4-methylthiazol-5(2H)-ylidene]ethyl phosphate + 2 H2O + H(+). The protein operates within cofactor biosynthesis; thiamine diphosphate biosynthesis. In terms of biological role, catalyzes the rearrangement of 1-deoxy-D-xylulose 5-phosphate (DXP) to produce the thiazole phosphate moiety of thiamine. Sulfur is provided by the thiocarboxylate moiety of the carrier protein ThiS. In vitro, sulfur can be provided by H(2)S. The chain is Thiazole synthase from Staphylococcus carnosus (strain TM300).